Here is a 518-residue protein sequence, read N- to C-terminus: Bifunctional purine biosynthesis protein PurH (518 aa).

Residues 1 to 146 (MARIALISVS…KNHESVSILT (146 aa)) form the MGS-like domain.

Belongs to the PurH family.

The enzyme catalyses (6R)-10-formyltetrahydrofolate + 5-amino-1-(5-phospho-beta-D-ribosyl)imidazole-4-carboxamide = 5-formamido-1-(5-phospho-D-ribosyl)imidazole-4-carboxamide + (6S)-5,6,7,8-tetrahydrofolate. The catalysed reaction is IMP + H2O = 5-formamido-1-(5-phospho-D-ribosyl)imidazole-4-carboxamide. It participates in purine metabolism; IMP biosynthesis via de novo pathway; 5-formamido-1-(5-phospho-D-ribosyl)imidazole-4-carboxamide from 5-amino-1-(5-phospho-D-ribosyl)imidazole-4-carboxamide (10-formyl THF route): step 1/1. It functions in the pathway purine metabolism; IMP biosynthesis via de novo pathway; IMP from 5-formamido-1-(5-phospho-D-ribosyl)imidazole-4-carboxamide: step 1/1. The sequence is that of Bifunctional purine biosynthesis protein PurH from Prochlorococcus marinus (strain MIT 9211).